The primary structure comprises 428 residues: MAENDVDNELLDYEDDEVETAAGGDGAEAPAKKDVKGSYVSIHSSGFRDFLLKPELLRAIVDCGFEHPSEVQHECIPQAILGMDVLCQAKSGMGKTAVFVLATLQQLEPVTGQVSVLVMCHTRELAFQISKEYERFSKYMPNVKVAVFFGGLSIKKDEEVLKKNCPHIVVGTPGRILALARNKSLNLKHIKHFILDECDKMLEQLDMRRDVQEIFRMTPHEKQVMMFSATLSKEIRPVCRKFMQDPMEIFVDDETKLTLHGLQQYYVKLKDNEKNRKLFDLLDVLEFNQVVIFVKSVQRCIALAQLLVEQNFPAIAIHRGMPQEERLSRYQQFKDFQRRILVATNLFGRGMDIERVNIAFNYDMPEDSDTYLHRVARAGRFGTKGLAITFVSDENDAKILNDVQDRFEVNISELPDEIDISSYIEQTR.

A compositionally biased stretch (acidic residues) spans methionine 1–glutamate 19. The disordered stretch occupies residues methionine 1–alanine 31. The residue at position 2 (alanine 2) is an N-acetylalanine. Position 36 is an N6-acetyllysine; alternate (lysine 36). Lysine 36 is covalently cross-linked (Glycyl lysine isopeptide (Lys-Gly) (interchain with G-Cter in SUMO2); alternate). Phosphoserine is present on residues serine 38 and serine 41. The Q motif motif lies at serine 45–histidine 73. The Helicase ATP-binding domain maps to isoleucine 76 to isoleucine 249. Alanine 89–threonine 96 is a binding site for ATP. At threonine 172 the chain carries Phosphothreonine. The DECD box motif lies at aspartate 196–aspartate 199. In terms of domain architecture, Helicase C-terminal spans glycine 261 to serine 422.

This sequence belongs to the DEAD box helicase family. DECD subfamily. Homodimer, and heterodimer with DDX39A. DDX39B interacts with the THO subcomplex to form the THO-DDX39B complex which multimerizes into a 28-subunit tetrameric assembly. Component of the transcription/export (TREX) complex at least composed of ALYREF/THOC4, DDX39B, SARNP/CIP29, CHTOP and the THO subcomplex; in the complex interacts with THOC2. THOC1-THOC2-THOC3-DDX39B subcomplex is sufficient for the interaction with export factor NXF1-NXT1. TREX seems to have a dynamic structure involving ATP-dependent remodeling. Within the TREX complex bridges ALYREF/THOC4 and the THO subcomplex, and, in a ATP-dependent manner, ALYREF/THOC4 and SARNP/CIP29. Component of the spliceosome. Interacts directly with U2AF2. Interacts with RBM8A, RNPS1 and SRRM1, FYTTD1/UIF, THOC1, MX1 and POLDIP3. Interacts with LUZP4. Interacts with SARNP/CIP29 (via the C-terminal domain); the interaction is direct and facilitates RNA binding of DDX39B. As to quaternary structure, (Microbial infection) Interacts with human cytomegalovirus/HHV-5 protein UL69.

The protein localises to the nucleus. It localises to the nucleus speckle. The protein resides in the cytoplasm. It catalyses the reaction ATP + H2O = ADP + phosphate + H(+). In terms of biological role, involved in nuclear export of spliced and unspliced mRNA. Component of the TREX complex which is thought to couple mRNA transcription, processing and nuclear export, and specifically associates with spliced mRNA and not with unspliced pre-mRNA. The TREX complex is recruited to spliced mRNAs by a transcription-independent mechanism, binds to mRNA upstream of the exon-junction complex (EJC) and is recruited in a splicing- and cap-dependent manner to a region near the 5' end of the mRNA where it functions in mRNA export to the cytoplasm via the TAP/NXF1 pathway. The THOC1-THOC2-THOC3 core complex alone is sufficient to promote ATPase activity of DDX39B; in the complex THOC2 is the only component that directly interacts with DDX39B. Associates with SARNP/CIP29, which facilitates RNA binding of DDX39B and likely plays a role in mRNA export. May undergo several rounds of ATP hydrolysis during assembly of TREX to drive subsequent loading of components such as ALYREF/THOC4 and CHTOP onto mRNA. Also associates with pre-mRNA independent of ALYREF/THOC4. Involved in the nuclear export of intronless mRNA; the ATP-bound form is proposed to recruit export adapter ALYREF/THOC4 to intronless mRNA; its ATPase activity is cooperatively stimulated by RNA and ALYREF/THOC4 and ATP hydrolysis is thought to trigger the dissociation from RNA to allow the association of ALYREF/THOC4 and the NXF1-NXT1 heterodimer. Involved in transcription elongation and genome stability. Splice factor that is required for the first ATP-dependent step in spliceosome assembly and for the interaction of U2 snRNP with the branchpoint. Has both RNA-stimulated ATP binding/hydrolysis activity and ATP-dependent RNA unwinding activity. Even with the stimulation of RNA, the ATPase activity is weak. Can only hydrolyze ATP but not other NTPs. The RNA stimulation of ATPase activity does not have a strong preference for the sequence and length of the RNA. However, ssRNA stimulates the ATPase activity much more strongly than dsRNA. Can unwind 5' or 3' overhangs or blunt end RNA duplexes in vitro. The ATPase and helicase activities are not influenced by U2AF2; the effect of ALYREF/THOC4 is reported conflictingly with [PubMed:23299939] reporting a stimulatory effect. Functionally, (Microbial infection) The TREX complex is essential for the export of Kaposi's sarcoma-associated herpesvirus (KSHV) intronless mRNAs and infectious virus production. This is Spliceosome RNA helicase DDX39B from Homo sapiens (Human).